A 360-amino-acid chain; its full sequence is Hyaluronan and proteoglycan link protein 3 (360 aa).

The signal sequence occupies residues 1 to 17; sequence MGLLLLVPLLLLPGSYG. One can recognise an Ig-like V-type domain in the interval 48–164; it reads KLVVETPEET…ESGLVELELR (117 aa). 5 disulfide bridges follow: C70-C146, C188-C259, C212-C233, C286-C356, and C311-C332. Link domains are found at residues 166–261 and 266–358; these read VVFP…FCFA and GRVY…YCYR.

It belongs to the HAPLN family. As to expression, widely expressed with highest levels in spleen and placenta.

The protein localises to the secreted. It is found in the extracellular space. Its subcellular location is the extracellular matrix. May function in hyaluronic acid binding. This Homo sapiens (Human) protein is Hyaluronan and proteoglycan link protein 3 (HAPLN3).